The chain runs to 419 residues: Carbohydrate sulfotransferase 12 (419 aa).

The Cytoplasmic segment spans residues 1–5; the sequence is MTKPR. The chain crosses the membrane as a helical; Signal-anchor for type II membrane protein span at residues 6-26; sequence LFRLWLVLGSALMILLIIVYW. The Lumenal portion of the chain corresponds to 27 to 419; that stretch reads DNVGTAHFYL…YPKPENLLRD (393 aa). Residues 78-87 are compositionally biased toward basic and acidic residues; sequence HNDLSRRKTE. The tract at residues 78-99 is disordered; sequence HNDLSRRKTEQPPVPAPSKPVL. A glycan (N-linked (GlcNAc...) asparagine) is linked at Asn139. Position 176–182 (176–182) interacts with 3'-phosphoadenylyl sulfate; that stretch reads PKVACTN. N-linked (GlcNAc...) asparagine glycosylation is present at Asn214. 250–258 contacts 3'-phosphoadenylyl sulfate; the sequence is RDPFVRLIS. N-linked (GlcNAc...) asparagine glycosylation is found at Asn285 and Asn375.

This sequence belongs to the sulfotransferase 2 family.

Its subcellular location is the golgi apparatus membrane. The enzyme catalyses chondroitin beta-D-glucuronate + n 3'-phosphoadenylyl sulfate = chondroitin 4'-sulfate + n adenosine 3',5'-bisphosphate + n H(+). In terms of biological role, catalyzes the transfer of sulfate to position 4 of the N-acetylgalactosamine (GalNAc) residue of chondroitin and desulfated dermatan sulfate. Chondroitin sulfate constitutes the predominant proteoglycan present in cartilage and is distributed on the surfaces of many cells and extracellular matrices. Activity toward partially desulfated dermatan sulfate is however lower. Does not form 4, 6-di-O-sulfated GalNAc when chondroitin sulfate C is used as an acceptor. This Mus musculus (Mouse) protein is Carbohydrate sulfotransferase 12 (Chst12).